We begin with the raw amino-acid sequence, 235 residues long: Ribitol-5-phosphate cytidylyltransferase (235 aa).

CTP-binding positions include 7–10 (LAGG), 82–88 (GADRNTS), and serine 113.

This sequence belongs to the IspD/TarI cytidylyltransferase family. TarI subfamily.

It carries out the reaction D-ribitol 5-phosphate + CTP + H(+) = CDP-L-ribitol + diphosphate. The protein operates within cell wall biogenesis; poly(ribitol phosphate) teichoic acid biosynthesis. In terms of biological role, catalyzes the transfer of the cytidylyl group of CTP to D-ribitol 5-phosphate. The chain is Ribitol-5-phosphate cytidylyltransferase from Streptococcus pneumoniae serotype 19F (strain G54).